A 369-amino-acid chain; its full sequence is UPF0324 membrane protein DVU_0543 (369 aa).

9 consecutive transmembrane segments (helical) span residues isoleucine 13–valine 31, tryptophan 46–phenylalanine 65, glycine 110–glycine 132, threonine 142–valine 164, leucine 171–glycine 193, tryptophan 240–glycine 262, threonine 269–alanine 291, leucine 306–isoleucine 328, and leucine 341–isoleucine 363.

It belongs to the UPF0324 family.

The protein localises to the cell membrane. The protein is UPF0324 membrane protein DVU_0543 of Nitratidesulfovibrio vulgaris (strain ATCC 29579 / DSM 644 / CCUG 34227 / NCIMB 8303 / VKM B-1760 / Hildenborough) (Desulfovibrio vulgaris).